Consider the following 141-residue polypeptide: Large ribosomal subunit protein uL16 (141 aa).

This sequence belongs to the universal ribosomal protein uL16 family. As to quaternary structure, part of the 50S ribosomal subunit. Contacts the CTC protein (RL25).

Its function is as follows. Binds the 5S and 23S rRNAs and is also seen to make contacts with the A and P site tRNAs. Interacts with A site tRNA mimics, and is probably one of the key factors, along with a helix of the 23S rRNA, in positioning tRNA stems in the peptidyl-transferase center. The polypeptide is Large ribosomal subunit protein uL16 (rplP) (Deinococcus radiodurans (strain ATCC 13939 / DSM 20539 / JCM 16871 / CCUG 27074 / LMG 4051 / NBRC 15346 / NCIMB 9279 / VKM B-1422 / R1)).